Consider the following 181-residue polypeptide: BURP domain-containing protein 7 (181 aa).

A signal peptide spans 1–21; it reads MARSLAALLLLLVAAAGDSHA. Residues 65–181 enclose the BURP domain; that stretch reads FFLEKDLFPG…RRGRRTGWRP (117 aa). Positions 112–181 are disordered; that stretch reads QLSVPAGSPA…RRGRRTGWRP (70 aa). Residues 128–143 are compositionally biased toward basic residues; the sequence is RPRRSPARRSNARRRS. The segment covering 144–157 has biased composition (low complexity); that stretch reads SPWWSSPRPASAPA. The segment covering 170–181 has biased composition (basic residues); sequence GRRRGRRTGWRP.

Expressed in roots, stems, leaves and shoot.

The chain is BURP domain-containing protein 7 (BURP7) from Oryza sativa subsp. japonica (Rice).